Here is a 178-residue protein sequence, read N- to C-terminus: Probable inosine/xanthosine triphosphatase (178 aa).

This sequence belongs to the YjjX NTPase family. As to quaternary structure, homodimer. It depends on Mg(2+) as a cofactor. The cofactor is Mn(2+).

The enzyme catalyses XTP + H2O = XDP + phosphate + H(+). The catalysed reaction is ITP + H2O = IDP + phosphate + H(+). Phosphatase that hydrolyzes non-canonical purine nucleotides such as XTP and ITP to their respective diphosphate derivatives. Probably excludes non-canonical purines from DNA/RNA precursor pool, thus preventing their incorporation into DNA/RNA and avoiding chromosomal lesions. The sequence is that of Probable inosine/xanthosine triphosphatase from Pyrobaculum calidifontis (strain DSM 21063 / JCM 11548 / VA1).